Reading from the N-terminus, the 437-residue chain is GTPase Der (437 aa).

2 consecutive EngA-type G domains span residues 2 to 167 and 180 to 356; these read ATVL…EKKG and IRVA…NSLF. Residues 8–15, 55–59, 118–121, 186–193, 233–237, and 299–302 contribute to the GTP site; these read GKSNVGKS, DTCGI, NKSE, GRPNAGKS, DTAGL, and NKID. One can recognise a KH-like domain in the interval 357 to 437; sequence YRVQTSAVNA…PIFLKFKNRH (81 aa).

Belongs to the TRAFAC class TrmE-Era-EngA-EngB-Septin-like GTPase superfamily. EngA (Der) GTPase family. As to quaternary structure, associates with the 50S ribosomal subunit.

Functionally, GTPase that plays an essential role in the late steps of ribosome biogenesis. The polypeptide is GTPase Der (Thermosipho melanesiensis (strain DSM 12029 / CIP 104789 / BI429)).